Here is an 823-residue protein sequence, read N- to C-terminus: Putative ankyrin repeat domain-containing protein 20A3 (823 aa).

5 ANK repeats span residues 66–95 (QHRT…QIDV), 99–128 (ENRT…NPNL), 132–161 (YGNT…HIEA), 165–194 (DNNT…SSHA), and 198–227 (LRRS…DVFA). Disordered stretches follow at residues 301 to 343 (VPEK…EVED) and 355 to 402 (VQTL…LSEN). Positions 372-384 (QERHERSEKKQPQ) are enriched in basic and acidic residues. Coiled coils occupy residues 431 to 480 (KKLK…KQLE), 571 to 724 (AFRY…NNST), and 776 to 805 (LVLE…EKTE).

The chain is Putative ankyrin repeat domain-containing protein 20A3 from Homo sapiens (Human).